A 612-amino-acid chain; its full sequence is Dihydroxy-acid dehydratase (612 aa).

Asp81 lines the Mg(2+) pocket. Cys122 lines the [2Fe-2S] cluster pocket. Mg(2+) is bound by residues Asp123 and Lys124. N6-carboxylysine is present on Lys124. Cys195 lines the [2Fe-2S] cluster pocket. Glu492 lines the Mg(2+) pocket. The active-site Proton acceptor is Ser518.

It belongs to the IlvD/Edd family. As to quaternary structure, homodimer. Requires [2Fe-2S] cluster as cofactor. It depends on Mg(2+) as a cofactor.

The catalysed reaction is (2R)-2,3-dihydroxy-3-methylbutanoate = 3-methyl-2-oxobutanoate + H2O. The enzyme catalyses (2R,3R)-2,3-dihydroxy-3-methylpentanoate = (S)-3-methyl-2-oxopentanoate + H2O. The protein operates within amino-acid biosynthesis; L-isoleucine biosynthesis; L-isoleucine from 2-oxobutanoate: step 3/4. Its pathway is amino-acid biosynthesis; L-valine biosynthesis; L-valine from pyruvate: step 3/4. In terms of biological role, functions in the biosynthesis of branched-chain amino acids. Catalyzes the dehydration of (2R,3R)-2,3-dihydroxy-3-methylpentanoate (2,3-dihydroxy-3-methylvalerate) into 2-oxo-3-methylpentanoate (2-oxo-3-methylvalerate) and of (2R)-2,3-dihydroxy-3-methylbutanoate (2,3-dihydroxyisovalerate) into 2-oxo-3-methylbutanoate (2-oxoisovalerate), the penultimate precursor to L-isoleucine and L-valine, respectively. The sequence is that of Dihydroxy-acid dehydratase from Kocuria rhizophila (strain ATCC 9341 / DSM 348 / NBRC 103217 / DC2201).